Reading from the N-terminus, the 353-residue chain is MLPSLQSLTKKVLAKQCVPVDQYHVLKCCGLWWYDGPITFYVYRHKMFIRSTCFSEGIELNTVLMKAAKENNHDLIRLFAEWGADINYGLICAHTEHTRNLCRELGAKDRLDRDYILKIFFDTTRNKTDSNIILCHEMFSNNPNLKNVDNLDLREEIMWELRGLMEITYMLDHDNSFSNMLTKYWYAIAVDYGLKKAIHYFYQRYTHLHHWRLMCALFYNNVFDLHELYVIERVRMDIDEMMHIACVQDYSYAAIYYCFIMGANINQAMLVSIQNYNLGNMFFCIDLGANAFEEGKALAEQKENYLIADALSLKHYNPVISLLSVIMDPEKINCMLKNYHSINMRVFLDYERR.

The protein belongs to the asfivirus MGF 360 family. Interacts with host TBK1 ad IRF7.

Functionally, plays a role in virus cell tropism, and may be required for efficient virus replication in macrophages. In addition, inhibits the phosphorylation of host TBK1 and IRF7 and thereby negatively regulates the host cGAS signaling pathway and antagonizes IFN-mediated antiviral activity. In Ornithodoros (relapsing fever ticks), this protein is Protein MGF 360-11L.